A 653-amino-acid chain; its full sequence is Sodium-dependent nutrient amino acid transporter 1 (653 aa).

Residues 1 to 55 are disordered; the sequence is MELKGVHQQNGTSNGTGAAGTEGESPPPAPAPATAEAAASLETTTEKVDAEQQKT. At 1-59 the chain is on the cytoplasmic side; sequence MELKGVHQQNGTSNGTGAAGTEGESPPPAPAPATAEAAASLETTTEKVDAEQQKTERTN. 2 stretches are compositionally biased toward low complexity: residues 10 to 24 and 32 to 43; these read NGTSNGTGAAGTEGE and PATAEAAASLET. Over residues 44-55 the composition is skewed to basic and acidic residues; that stretch reads TTEKVDAEQQKT. Helical transmembrane passes span 60 to 80, 93 to 113, 125 to 145, and 146 to 166; these read WGNGLEFLMSCISVSVGLGNV, GAFLIPYIIVLFLIGKPMYYL, TVKIWSVVPGFVGVGYGQAFA, and TICIITYYSSLLALTLFYLFV. 2 N-linked (GlcNAc...) asparagine glycosylation sites follow: Asn202 and Asn205. 9 helical membrane passes run 241-261, 270-290, 319-339, 353-373, 413-433, 459-479, 486-506, 528-548, and 565-585; these read PDWKLTLALFVSWVVIFLVIM, AAYFLALFPYVVLFILLVRAV, AVVQCFFSLAVGSGPIIMFAS, IVTTLDTLTSLLGGITIFAIL, LFSVLFFFMLFVLGIGSIVAL, ICGFLMGLVYVTPGGQWILTL, TYVVFILAIFELAGIVWIYGM, CWSFFTPVMMIVIFIYSMVTI, and AGWLLFGIGAAQFPLWWMWYI.

The protein belongs to the sodium:neurotransmitter symporter (SNF) (TC 2.A.22) family.

The protein resides in the membrane. Its function is as follows. Unusual broad substrate spectrum amino acid:sodium cotransporter that promotes absorption of the D isomers of essential amino acids. Neutral amino acids are the preferred substrates, especially methionine and phenylalanine. The polypeptide is Sodium-dependent nutrient amino acid transporter 1 (Drosophila pseudoobscura pseudoobscura (Fruit fly)).